The sequence spans 463 residues: ATP-dependent protease ATPase subunit HslU (463 aa).

Residues valine 21, 63–68 (GVGKTE), aspartate 276, glutamate 341, and arginine 413 each bind ATP.

The protein belongs to the ClpX chaperone family. HslU subfamily. As to quaternary structure, a double ring-shaped homohexamer of HslV is capped on each side by a ring-shaped HslU homohexamer. The assembly of the HslU/HslV complex is dependent on binding of ATP.

The protein resides in the cytoplasm. ATPase subunit of a proteasome-like degradation complex; this subunit has chaperone activity. The binding of ATP and its subsequent hydrolysis by HslU are essential for unfolding of protein substrates subsequently hydrolyzed by HslV. HslU recognizes the N-terminal part of its protein substrates and unfolds these before they are guided to HslV for hydrolysis. The polypeptide is ATP-dependent protease ATPase subunit HslU (Thermotoga neapolitana (strain ATCC 49049 / DSM 4359 / NBRC 107923 / NS-E)).